A 259-amino-acid chain; its full sequence is Alpha-acetolactate decarboxylase (259 aa).

This sequence belongs to the alpha-acetolactate decarboxylase family.

The catalysed reaction is (2S)-2-acetolactate + H(+) = (R)-acetoin + CO2. Its pathway is polyol metabolism; (R,R)-butane-2,3-diol biosynthesis; (R,R)-butane-2,3-diol from pyruvate: step 2/3. Converts acetolactate into acetoin, which can be excreted by the cells. This may be a mechanism for controlling the internal pH of cells in the stationary stage. The protein is Alpha-acetolactate decarboxylase (budA) of Raoultella terrigena (Klebsiella terrigena).